We begin with the raw amino-acid sequence, 169 residues long: Lipoprotein signal peptidase (169 aa).

4 helical membrane passes run 10–30 (LPWL…KAFF), 40–60 (IVVI…AAFS), 68–88 (WQRW…VVWL), and 94–114 (GETW…GNLY). Catalysis depends on residues Asp-124 and Asp-143. Residues 135-155 (YFPAFNLADSAITVGAVMLAL) traverse the membrane as a helical segment.

Belongs to the peptidase A8 family.

It is found in the cell inner membrane. It catalyses the reaction Release of signal peptides from bacterial membrane prolipoproteins. Hydrolyzes -Xaa-Yaa-Zaa-|-(S,diacylglyceryl)Cys-, in which Xaa is hydrophobic (preferably Leu), and Yaa (Ala or Ser) and Zaa (Gly or Ala) have small, neutral side chains.. It functions in the pathway protein modification; lipoprotein biosynthesis (signal peptide cleavage). Its function is as follows. This protein specifically catalyzes the removal of signal peptides from prolipoproteins. This Pseudomonas aeruginosa (strain UCBPP-PA14) protein is Lipoprotein signal peptidase.